We begin with the raw amino-acid sequence, 155 residues long: SsrA-binding protein (155 aa).

The protein belongs to the SmpB family.

The protein localises to the cytoplasm. In terms of biological role, required for rescue of stalled ribosomes mediated by trans-translation. Binds to transfer-messenger RNA (tmRNA), required for stable association of tmRNA with ribosomes. tmRNA and SmpB together mimic tRNA shape, replacing the anticodon stem-loop with SmpB. tmRNA is encoded by the ssrA gene; the 2 termini fold to resemble tRNA(Ala) and it encodes a 'tag peptide', a short internal open reading frame. During trans-translation Ala-aminoacylated tmRNA acts like a tRNA, entering the A-site of stalled ribosomes, displacing the stalled mRNA. The ribosome then switches to translate the ORF on the tmRNA; the nascent peptide is terminated with the 'tag peptide' encoded by the tmRNA and targeted for degradation. The ribosome is freed to recommence translation, which seems to be the essential function of trans-translation. This is SsrA-binding protein from Bacillus cereus (strain B4264).